Here is a 336-residue protein sequence, read N- to C-terminus: Nicotinate-nucleotide--dimethylbenzimidazole phosphoribosyltransferase (336 aa).

Residues 20-41 form a disordered region; it reads GPDAAARAGAEERNGQLTKPPG. Glutamate 304 (proton acceptor) is an active-site residue.

The protein belongs to the CobT family.

It catalyses the reaction 5,6-dimethylbenzimidazole + nicotinate beta-D-ribonucleotide = alpha-ribazole 5'-phosphate + nicotinate + H(+). It functions in the pathway nucleoside biosynthesis; alpha-ribazole biosynthesis; alpha-ribazole from 5,6-dimethylbenzimidazole: step 1/2. In terms of biological role, catalyzes the synthesis of alpha-ribazole-5'-phosphate from nicotinate mononucleotide (NAMN) and 5,6-dimethylbenzimidazole (DMB). The chain is Nicotinate-nucleotide--dimethylbenzimidazole phosphoribosyltransferase from Ruegeria pomeroyi (strain ATCC 700808 / DSM 15171 / DSS-3) (Silicibacter pomeroyi).